The primary structure comprises 493 residues: Glutamate--tRNA ligase (493 aa).

The 'HIGH' region signature appears at 9–19; it reads PSPTGDPHVGT. The 'KMSKS' region signature appears at 249-253; that stretch reads KLSKR. Residue Lys252 coordinates ATP.

Belongs to the class-I aminoacyl-tRNA synthetase family. Glutamate--tRNA ligase type 1 subfamily. In terms of assembly, monomer.

It is found in the cytoplasm. It catalyses the reaction tRNA(Glu) + L-glutamate + ATP = L-glutamyl-tRNA(Glu) + AMP + diphosphate. Its function is as follows. Catalyzes the attachment of glutamate to tRNA(Glu) in a two-step reaction: glutamate is first activated by ATP to form Glu-AMP and then transferred to the acceptor end of tRNA(Glu). This chain is Glutamate--tRNA ligase, found in Marinobacter nauticus (strain ATCC 700491 / DSM 11845 / VT8) (Marinobacter aquaeolei).